Here is a 99-residue protein sequence, read N- to C-terminus: Biogenesis of lysosome-related organelles complex 1 subunit SNN1 (99 aa).

Residues 34-94 (SINELRESQA…VVLKRYEKMV (61 aa)) adopt a coiled-coil conformation.

The protein belongs to the SNAPIN family. Component of the biogenesis of lysosome-related organelles complex-1 (BLOC-1).

It localises to the endosome. Its function is as follows. Component of the biogenesis of lysosome-related organelles complex-1 (BLOC-1), a complex involved in endosomal cargo sorting. In Kluyveromyces lactis (strain ATCC 8585 / CBS 2359 / DSM 70799 / NBRC 1267 / NRRL Y-1140 / WM37) (Yeast), this protein is Biogenesis of lysosome-related organelles complex 1 subunit SNN1 (SNN1).